We begin with the raw amino-acid sequence, 294 residues long: NADH-cytochrome b5 reductase 2 (294 aa).

A helical transmembrane segment spans residues 11 to 27 (VLLPVVAAATSIGLVYH). The 105-residue stretch at 45-149 (DEWIDLKLKK…KGPIVKWKWE (105 aa)) folds into the FAD-binding FR-type domain. 152 to 187 (QFQSIALIGGGTGITPLYQLLHEITKNPEDKTKVKL) is a binding site for FAD.

Belongs to the flavoprotein pyridine nucleotide cytochrome reductase family. The cofactor is FAD.

It is found in the mitochondrion outer membrane. The enzyme catalyses 2 Fe(III)-[cytochrome b5] + NADH = 2 Fe(II)-[cytochrome b5] + NAD(+) + H(+). Functionally, may mediate the reduction of outer membrane cytochrome b5. The chain is NADH-cytochrome b5 reductase 2 (MCR1) from Meyerozyma guilliermondii (strain ATCC 6260 / CBS 566 / DSM 6381 / JCM 1539 / NBRC 10279 / NRRL Y-324) (Yeast).